Reading from the N-terminus, the 210-residue chain is Ion-translocating oxidoreductase complex subunit G (210 aa).

The chain crosses the membrane as a helical span at residues 9–29 (SLVLALFAIAATALVTITYAL). Thr-176 bears the FMN phosphoryl threonine mark.

The protein belongs to the RnfG family. In terms of assembly, the complex is composed of six subunits: RnfA, RnfB, RnfC, RnfD, RnfE and RnfG. The cofactor is FMN.

It is found in the cell inner membrane. Part of a membrane-bound complex that couples electron transfer with translocation of ions across the membrane. This Aliivibrio fischeri (strain ATCC 700601 / ES114) (Vibrio fischeri) protein is Ion-translocating oxidoreductase complex subunit G.